We begin with the raw amino-acid sequence, 244 residues long: MTNLLPEMAEIWQQTLNWQPTVQQQEQFQRLYELILEGNRQLNLTRITDPQEFWEKHLWDSLRGILPLLSGNLPPASPTIIDIGTGAGFPGVPVAMTVPNCTITLLDSTQKKITFLDNILTELALTNTKTIVGRAEKIGQHPQHRMAYDIALIRAVGAVSVCAEYTLPLLKQGGLAIIYRGNWTKDETTALQNAVKLLGGVIESIEQFTTPLSHSIRHCVYLRKVATTPVQFPRPIGVPTQKPL.

S-adenosyl-L-methionine contacts are provided by residues G84, F89, 107–109, 135–136, and R154; these read DST and AE.

The protein belongs to the methyltransferase superfamily. RNA methyltransferase RsmG family.

The protein resides in the cytoplasm. Functionally, specifically methylates the N7 position of a guanine in 16S rRNA. This Nostoc punctiforme (strain ATCC 29133 / PCC 73102) protein is Ribosomal RNA small subunit methyltransferase G.